The primary structure comprises 351 residues: Thiamine-phosphate synthase (351 aa).

The segment at 1-128 is unknown; the sequence is MLNSNTKDHE…SKIASEIRYE (128 aa). Residues 129-351 form a thiamine-phosphate synthase region; sequence IYTVEIDLLS…MILKELSHEN (223 aa). 4-amino-2-methyl-5-(diphosphooxymethyl)pyrimidine is bound by residues 180-184 and Asn212; that span reads QHRFK. 2 residues coordinate Mg(2+): Asp213 and Asp232. Ser251 provides a ligand contact to 4-amino-2-methyl-5-(diphosphooxymethyl)pyrimidine. 277–279 provides a ligand contact to 2-[(2R,5Z)-2-carboxy-4-methylthiazol-5(2H)-ylidene]ethyl phosphate; it reads TTT. 4-amino-2-methyl-5-(diphosphooxymethyl)pyrimidine is bound at residue Lys280. Gly307 contributes to the 2-[(2R,5Z)-2-carboxy-4-methylthiazol-5(2H)-ylidene]ethyl phosphate binding site.

The protein belongs to the thiamine-phosphate synthase family. It depends on Mg(2+) as a cofactor.

It catalyses the reaction 2-[(2R,5Z)-2-carboxy-4-methylthiazol-5(2H)-ylidene]ethyl phosphate + 4-amino-2-methyl-5-(diphosphooxymethyl)pyrimidine + 2 H(+) = thiamine phosphate + CO2 + diphosphate. It carries out the reaction 2-(2-carboxy-4-methylthiazol-5-yl)ethyl phosphate + 4-amino-2-methyl-5-(diphosphooxymethyl)pyrimidine + 2 H(+) = thiamine phosphate + CO2 + diphosphate. The catalysed reaction is 4-methyl-5-(2-phosphooxyethyl)-thiazole + 4-amino-2-methyl-5-(diphosphooxymethyl)pyrimidine + H(+) = thiamine phosphate + diphosphate. It participates in cofactor biosynthesis; thiamine diphosphate biosynthesis; thiamine phosphate from 4-amino-2-methyl-5-diphosphomethylpyrimidine and 4-methyl-5-(2-phosphoethyl)-thiazole: step 1/1. Functionally, condenses 4-methyl-5-(beta-hydroxyethyl)thiazole monophosphate (THZ-P) and 2-methyl-4-amino-5-hydroxymethyl pyrimidine pyrophosphate (HMP-PP) to form thiamine monophosphate (TMP). This chain is Thiamine-phosphate synthase, found in Prochlorococcus marinus (strain AS9601).